A 732-amino-acid chain; its full sequence is S-adenosyl-L-methionine-dependent tRNA 4-demethylwyosine synthase TYW1 (732 aa).

The Flavodoxin-like domain occupies 79–237 (VKIFYGSQTG…DFRAWKTKFI (159 aa)). FMN-binding positions include 85-89 (SQTGT) and 176-208 (VFGL…HRVM). Residues 248–314 (RKKSCGGHCK…HQSLNSIVDV (67 aa)) are disordered. Residues 259 to 286 (GKCESHQHGSEEREEGSHEQDELHHRDT) are compositionally biased toward basic and acidic residues. The segment covering 287–301 (EEEEPFESSSEEEFG) has biased composition (acidic residues). The region spanning 400 to 644 (YGIESHRCME…VDLIPEYEIA (245 aa)) is the Radical SAM core domain. [4Fe-4S] cluster-binding residues include Cys-416, Cys-420, and Cys-423.

The protein belongs to the TYW1 family. Requires [4Fe-4S] cluster as cofactor.

It carries out the reaction N(1)-methylguanosine(37) in tRNA(Phe) + pyruvate + S-adenosyl-L-methionine = 4-demethylwyosine(37) in tRNA(Phe) + 5'-deoxyadenosine + L-methionine + CO2 + H2O. It participates in tRNA modification; wybutosine-tRNA(Phe) biosynthesis. Functionally, probable component of the wybutosine biosynthesis pathway. Wybutosine is a hyper modified guanosine with a tricyclic base found at the 3'-position adjacent to the anticodon of eukaryotic phenylalanine tRNA. Catalyzes the condensation of N-methylguanine with 2 carbon atoms from pyruvate to form the tricyclic 4-demethylwyosine, an intermediate in wybutosine biosynthesis. This is S-adenosyl-L-methionine-dependent tRNA 4-demethylwyosine synthase TYW1 (TYW1) from Homo sapiens (Human).